Consider the following 267-residue polypeptide: 3-methyl-2-oxobutanoate hydroxymethyltransferase (267 aa).

Residues D46 and D85 each contribute to the Mg(2+) site. 3-methyl-2-oxobutanoate is bound by residues 46–47 (DS), D85, and K115. E117 contacts Mg(2+). E184 serves as the catalytic Proton acceptor.

The protein belongs to the PanB family. In terms of assembly, homodecamer; pentamer of dimers. The cofactor is Mg(2+).

Its subcellular location is the cytoplasm. The enzyme catalyses 3-methyl-2-oxobutanoate + (6R)-5,10-methylene-5,6,7,8-tetrahydrofolate + H2O = 2-dehydropantoate + (6S)-5,6,7,8-tetrahydrofolate. It functions in the pathway cofactor biosynthesis; (R)-pantothenate biosynthesis; (R)-pantoate from 3-methyl-2-oxobutanoate: step 1/2. In terms of biological role, catalyzes the reversible reaction in which hydroxymethyl group from 5,10-methylenetetrahydrofolate is transferred onto alpha-ketoisovalerate to form ketopantoate. This Citrifermentans bemidjiense (strain ATCC BAA-1014 / DSM 16622 / JCM 12645 / Bem) (Geobacter bemidjiensis) protein is 3-methyl-2-oxobutanoate hydroxymethyltransferase.